Here is a 297-residue protein sequence, read N- to C-terminus: tRNA-cytidine(32) 2-sulfurtransferase (297 aa).

The PP-loop motif signature appears at 61–66; that stretch reads SGGKDS. [4Fe-4S] cluster is bound by residues Cys136, Cys139, and Cys227.

This sequence belongs to the TtcA family. As to quaternary structure, homodimer. Mg(2+) is required as a cofactor. It depends on [4Fe-4S] cluster as a cofactor.

The protein localises to the cytoplasm. The catalysed reaction is cytidine(32) in tRNA + S-sulfanyl-L-cysteinyl-[cysteine desulfurase] + AH2 + ATP = 2-thiocytidine(32) in tRNA + L-cysteinyl-[cysteine desulfurase] + A + AMP + diphosphate + H(+). The protein operates within tRNA modification. In terms of biological role, catalyzes the ATP-dependent 2-thiolation of cytidine in position 32 of tRNA, to form 2-thiocytidine (s(2)C32). The sulfur atoms are provided by the cysteine/cysteine desulfurase (IscS) system. This Paracoccus denitrificans (strain Pd 1222) protein is tRNA-cytidine(32) 2-sulfurtransferase.